The following is a 749-amino-acid chain: Probable galactinol--sucrose galactosyltransferase 6 (749 aa).

Belongs to the glycosyl hydrolases 36 family.

It catalyses the reaction alpha-D-galactosyl-(1-&gt;3)-1D-myo-inositol + sucrose = raffinose + myo-inositol. In terms of biological role, transglycosidase operating by a ping-pong reaction mechanism. Involved in the synthesis of raffinose, a major soluble carbohydrate in seeds, roots and tubers. This is Probable galactinol--sucrose galactosyltransferase 6 (RFS6) from Arabidopsis thaliana (Mouse-ear cress).